Reading from the N-terminus, the 287-residue chain is Cell wall protein PIR5 (287 aa).

Residues 1 to 21 (MHYKKAFLASLLSSIALTAYA) form the signal peptide. A propeptide spanning residues 22-62 (PPEPWATLTPSSKMDGGTTEYRTSFGLAVIPFTVTESKVKR) is cleaved from the precursor. PIR1/2/3 repeat units follow at residues 62–80 (RNVI…TQKL), 81–99 (PHPV…TQKV), 104–122 (SHIV…TAKN), and 144–162 (ATAV…ISSA).

This sequence belongs to the PIR protein family. Covalently linked to beta-1,3-glucan of the inner cell wall layer via an alkali-sensitive ester linkage between the gamma-carboxyl group of glutamic acids, arising from specific glutamines within the PIR1/2/3 repeats, and hydroxyl groups of glucoses of beta-1,3-glucan chains.

The protein localises to the secreted. It localises to the cell wall. Functionally, component of the outer cell wall layer. May be involved in meiosis and sporulation. The protein is Cell wall protein PIR5 (PIR5) of Saccharomyces cerevisiae (strain YJM789) (Baker's yeast).